We begin with the raw amino-acid sequence, 874 residues long: Alanine--tRNA ligase (874 aa).

Histidine 562, histidine 566, cysteine 665, and histidine 669 together coordinate Zn(2+).

It belongs to the class-II aminoacyl-tRNA synthetase family. Zn(2+) serves as cofactor.

Its subcellular location is the cytoplasm. It carries out the reaction tRNA(Ala) + L-alanine + ATP = L-alanyl-tRNA(Ala) + AMP + diphosphate. Catalyzes the attachment of alanine to tRNA(Ala) in a two-step reaction: alanine is first activated by ATP to form Ala-AMP and then transferred to the acceptor end of tRNA(Ala). Also edits incorrectly charged Ser-tRNA(Ala) and Gly-tRNA(Ala) via its editing domain. The protein is Alanine--tRNA ligase of Stutzerimonas stutzeri (strain A1501) (Pseudomonas stutzeri).